Here is a 125-residue protein sequence, read N- to C-terminus: Small ribosomal subunit protein uS12 (125 aa).

The tract at residues 1-26 (MPTINQLVRKSRKTVKAQSDSPALKN) is disordered. Asp-89 is subject to 3-methylthioaspartic acid.

This sequence belongs to the universal ribosomal protein uS12 family. As to quaternary structure, part of the 30S ribosomal subunit. Contacts proteins S8 and S17. May interact with IF1 in the 30S initiation complex.

Functionally, with S4 and S5 plays an important role in translational accuracy. Interacts with and stabilizes bases of the 16S rRNA that are involved in tRNA selection in the A site and with the mRNA backbone. Located at the interface of the 30S and 50S subunits, it traverses the body of the 30S subunit contacting proteins on the other side and probably holding the rRNA structure together. The combined cluster of proteins S8, S12 and S17 appears to hold together the shoulder and platform of the 30S subunit. The chain is Small ribosomal subunit protein uS12 from Clostridium tetani (strain Massachusetts / E88).